A 251-amino-acid polypeptide reads, in one-letter code: Hydroxyacylglutathione hydrolase (251 aa).

Residues His53, His55, Asp57, His58, His110, Asp127, and His165 each coordinate Zn(2+).

The protein belongs to the metallo-beta-lactamase superfamily. Glyoxalase II family. Monomer. Requires Zn(2+) as cofactor.

It carries out the reaction an S-(2-hydroxyacyl)glutathione + H2O = a 2-hydroxy carboxylate + glutathione + H(+). It participates in secondary metabolite metabolism; methylglyoxal degradation; (R)-lactate from methylglyoxal: step 2/2. Thiolesterase that catalyzes the hydrolysis of S-D-lactoyl-glutathione to form glutathione and D-lactic acid. This is Hydroxyacylglutathione hydrolase from Salmonella dublin (strain CT_02021853).